The chain runs to 180 residues: ADP-ribosylation factor 5 (180 aa).

Glycine 2 is lipidated: N-myristoyl glycine. Residues 24 to 31 (GLDAAGKT), 67 to 71 (DVGGQ), and 126 to 129 (NKQD) each bind GTP.

Belongs to the small GTPase superfamily. Arf family. As to quaternary structure, interacts (when activated) with GGA1, GGA2 and GGA3; the interaction is required for proper subcellular location of GGA1, GGA2 and GGA3. Binds ASAP2. Interacts with NCS1/FREQ at the Golgi complex. Interacts with RAB11FIP3 and RAB11FIP4.

The protein localises to the golgi apparatus. The protein resides in the cytoplasm. It is found in the perinuclear region. It localises to the membrane. Its subcellular location is the trans-Golgi network membrane. GTP-binding protein involved in protein trafficking; may modulate vesicle budding and uncoating within the Golgi apparatus. Functionally, (Microbial infection) Functions as an allosteric activator of the cholera toxin catalytic subunit, an ADP-ribosyltransferase. The sequence is that of ADP-ribosylation factor 5 (ARF5) from Homo sapiens (Human).